Reading from the N-terminus, the 357-residue chain is Biotin synthase (357 aa).

The Radical SAM core domain occupies asparagine 41–arginine 268. [4Fe-4S] cluster-binding residues include cysteine 56, cysteine 60, and cysteine 63. Cysteine 100, cysteine 131, cysteine 191, and arginine 263 together coordinate [2Fe-2S] cluster.

It belongs to the radical SAM superfamily. Biotin synthase family. Homodimer. It depends on [4Fe-4S] cluster as a cofactor. The cofactor is [2Fe-2S] cluster.

The enzyme catalyses (4R,5S)-dethiobiotin + (sulfur carrier)-SH + 2 reduced [2Fe-2S]-[ferredoxin] + 2 S-adenosyl-L-methionine = (sulfur carrier)-H + biotin + 2 5'-deoxyadenosine + 2 L-methionine + 2 oxidized [2Fe-2S]-[ferredoxin]. It participates in cofactor biosynthesis; biotin biosynthesis; biotin from 7,8-diaminononanoate: step 2/2. Functionally, catalyzes the conversion of dethiobiotin (DTB) to biotin by the insertion of a sulfur atom into dethiobiotin via a radical-based mechanism. The protein is Biotin synthase of Shewanella denitrificans (strain OS217 / ATCC BAA-1090 / DSM 15013).